The following is an 870-amino-acid chain: H(+)/Cl(-) exchange transporter 6 (870 aa).

At 1–80 (MAGCRGSVCC…KKGRRYEAVK (80 aa)) the chain is on the cytoplasmic side. The next 2 helical transmembrane spans lie at 81-113 (WMVVFAIGVCTGLVGLFVDFSVRLFTQLKFGVV) and 128-150 (LSLLELLGFNLTFVFLASLLVLI). The Selectivity filter part_1 motif lies at 156–160 (GSGIP). Ser-157 serves as a coordination point for chloride. An intramembrane region (helical) is located at residues 159-166 (IPEIKCYL). Transmembrane regions (helical) follow at residues 176-194 (RLRTLLCKVFGVLFSVSGG) and 200-217 (EGPMIHSGAVVGAGLPQF). The Selectivity filter part_2 signature appears at 198–202 (GKEGP). Intramembrane regions (helical) lie at residues 241-253 (FVSAGAAAGVAAA) and 257-265 (PIGGTLFSL). The next 3 helical transmembrane spans lie at 277–294 (TWKVLFCSMSATFTLNFF), 335–364 (GFFVVMGVIGGLLGATFNCLNKRLAKYRMR), and 371–392 (KLVRVLESLLVSLVTTVVVFVA). Residues Asn-410, Asn-423, and Asn-433 are each glycosylated (N-linked (GlcNAc...) asparagine). 2 helical membrane passes run 463–482 (PVTLALFFILYFLLACWTFG) and 488–512 (GLFVPSLLCGAAFGRLVANVLKSYI). A Selectivity filter part_3 motif is present at residues 488–492 (GLFVP). A chloride-binding site is contributed by Phe-490. An intramembrane region (helical) is located at residues 520–534 (GTFALIGAAAFLGGV). The segment at residues 535–537 (VRM) is an intramembrane region (note=Loop between two helices). Positions 538–549 (TISLTVILIEST) form an intramembrane region, helical. Residues 550 to 553 (NEIT) constitute an intramembrane region (note=Loop between two helices). A helical transmembrane segment spans residues 554 to 572 (YGLPIMVTLMVAKWTGDLF). The Cytoplasmic segment spans residues 573–870 (NKGIYDVHIG…ARLRQHYQTL (298 aa)). Tyr-577 provides a ligand contact to chloride. The CBS 1 domain maps to 606 to 663 (MEPNLTYVYPHTRIQSLVSILRTTVHHAFPVVTENRGNEKEFMKGNQLISNNIKFKKS). 631–633 (HHA) is an ATP binding site. Phosphoserine is present on Ser-774. Residues 808–869 (MNPSPFTVSP…QARLRQHYQT (62 aa)) enclose the CBS 2 domain. 850-853 (TRHN) contacts ATP.

This sequence belongs to the chloride channel (TC 2.A.49) family. ClC-6/CLCN6 subfamily. Post-translationally, N-glycosylated on several asparagine residues. As to expression, detected in whole brain and in hippocampus neurons (at protein level). Detected in brain, trigeminus, dorsal root ganglion, spinal cord, eye, kidney, testis, skeletal muscle, thymus and pancreas. Isoform ClC-6c is expressed only in kidney.

Its subcellular location is the late endosome membrane. The enzyme catalyses 2 chloride(in) + H(+)(out) = 2 chloride(out) + H(+)(in). Its function is as follows. Voltage-gated channel mediating the exchange of chloride ions against protons. Functions as antiporter and contributes to the acidification of the late endosome lumen. The CLC channel family contains both chloride channels and proton-coupled anion transporters that exchange chloride or another anion for protons. The presence of conserved gating glutamate residues is typical for family members that function as antiporters. This chain is H(+)/Cl(-) exchange transporter 6, found in Mus musculus (Mouse).